The chain runs to 361 residues: Chorismate synthase (361 aa).

Residues arginine 48 and arginine 54 each contribute to the NADP(+) site. Residues 125-127 (RSS), 238-239 (NA), glycine 278, 293-297 (KPTSS), and arginine 319 contribute to the FMN site.

Belongs to the chorismate synthase family. As to quaternary structure, homotetramer. Requires FMNH2 as cofactor.

The enzyme catalyses 5-O-(1-carboxyvinyl)-3-phosphoshikimate = chorismate + phosphate. It functions in the pathway metabolic intermediate biosynthesis; chorismate biosynthesis; chorismate from D-erythrose 4-phosphate and phosphoenolpyruvate: step 7/7. In terms of biological role, catalyzes the anti-1,4-elimination of the C-3 phosphate and the C-6 proR hydrogen from 5-enolpyruvylshikimate-3-phosphate (EPSP) to yield chorismate, which is the branch point compound that serves as the starting substrate for the three terminal pathways of aromatic amino acid biosynthesis. This reaction introduces a second double bond into the aromatic ring system. In Yersinia pseudotuberculosis serotype O:1b (strain IP 31758), this protein is Chorismate synthase.